A 785-amino-acid polypeptide reads, in one-letter code: Protein SEY1 (785 aa).

Positions 1–31 (MASAAPINLRAQDTPYVPPTSLPTSSSQTGS) are disordered. The Cytoplasmic portion of the chain corresponds to 1–689 (MASAAPINLR…KRSTVASIAQ (689 aa)). Residues 22-31 (LPTSSSQTGS) show a composition bias toward low complexity. Residues 61-281 (GFSYNIVAVF…SSDYLFKPAY (221 aa)) form the GB1/RHD3-type G domain. 71-78 (GSQSTGKS) provides a ligand contact to GTP. Residues 458 to 482 (SWEEELELLRDEIRAVADQCRKDET) adopt a coiled-coil conformation. The helical transmembrane segment at 690 to 710 (IPYWIYGVLVVLGWNEAMLVL) threads the bilayer. Over 711-713 (FNP) the chain is Lumenal. Residues 714–734 (LYFAFLLLAMATSYIIAQLGL) form a helical membrane-spanning segment. Topologically, residues 735–785 (VGPLFQVTRTVGSEIQRQATARLREHFSQPVLAEPVQVGPSRDREEVGQIQ) are cytoplasmic.

This sequence belongs to the TRAFAC class dynamin-like GTPase superfamily. GB1/RHD3 GTPase family. RHD3 subfamily.

The protein resides in the endoplasmic reticulum membrane. In terms of biological role, cooperates with the reticulon proteins and tubule-shaping DP1 family proteins to generate and maintain the structure of the tubular endoplasmic reticulum network. Has GTPase activity, which is required for its function in ER organization. The chain is Protein SEY1 from Laccaria bicolor (strain S238N-H82 / ATCC MYA-4686) (Bicoloured deceiver).